We begin with the raw amino-acid sequence, 466 residues long: Cytochrome c-552 (466 aa).

Residues 1–27 (MVRNLTKKSFALSALVAASLMASGVMA) form the signal peptide. His-87 contacts heme c. Residues Cys-115, Cys-118, and Lys-119 each coordinate heme. Cys-153, Cys-156, His-157, Cys-195, Cys-198, and His-199 together coordinate heme c. Ca(2+) contacts are provided by Glu-201, Tyr-202, Lys-250, and Gln-252. Tyr-202 contacts substrate. His-253 is a binding site for substrate. Heme c is bound by residues His-264, Cys-271, Cys-274, His-275, His-290, Cys-303, Cys-306, His-307, and His-382.

Belongs to the cytochrome c-552 family. Ca(2+) is required as a cofactor. Requires heme c as cofactor.

It localises to the periplasm. The catalysed reaction is 6 Fe(III)-[cytochrome c] + NH4(+) + 2 H2O = 6 Fe(II)-[cytochrome c] + nitrite + 8 H(+). Its pathway is nitrogen metabolism; nitrate reduction (assimilation). Functionally, catalyzes the reduction of nitrite to ammonia, consuming six electrons in the process. This is Cytochrome c-552 from Shewanella sediminis (strain HAW-EB3).